The sequence spans 284 residues: Serine/threonine-protein phosphatase Pgam5, mitochondrial (284 aa).

A helical transmembrane segment spans residues 8–24; it reads LGVPTATLAVGTLLLGD.

Belongs to the phosphoglycerate mutase family. BPG-dependent PGAM subfamily. Interacts with skn-1 isoforms a and c.

The protein localises to the mitochondrion outer membrane. The catalysed reaction is O-phospho-L-seryl-[protein] + H2O = L-seryl-[protein] + phosphate. It carries out the reaction O-phospho-L-threonyl-[protein] + H2O = L-threonyl-[protein] + phosphate. In terms of biological role, displays phosphatase activity for serine/threonine residues. Has apparently no phosphoglycerate mutase activity. This chain is Serine/threonine-protein phosphatase Pgam5, mitochondrial (pgam-5), found in Caenorhabditis elegans.